Consider the following 168-residue polypeptide: Repressed By RIM101 protein 2 (168 aa).

The signal sequence occupies residues 1–24 (MRFAFTTVSLSLLLSSLVASDAAS). The N-linked (GlcNAc...) asparagine glycan is linked to Asn83. Residues 111–149 (SGSASGSGSAKSTASAEKSSGSSASASSTAGGSSSKGGV) form a disordered region. Ser143 is lipidated: GPI-anchor amidated serine. Residues 144–168 (SSKGGVSELVAPVGAVVGALAVALM) constitute a propeptide, removed in mature form.

The protein belongs to the SRP1/TIP1 family. Post-translationally, the GPI-anchor is attached to the protein in the endoplasmic reticulum and serves to target the protein to the cell surface. There, the glucosamine-inositol phospholipid moiety is cleaved off and the GPI-modified mannoprotein is covalently attached via its lipidless GPI glycan remnant to the 1,6-beta-glucan of the outer cell wall layer.

The protein localises to the secreted. Its subcellular location is the cell wall. The protein resides in the membrane. Its function is as follows. Probable cell wall protein which may have esterase activity, with a preference for esters of fatty acids from 4 to 16 carbon atoms. The polypeptide is Repressed By RIM101 protein 2 (RBR2) (Candida albicans (strain SC5314 / ATCC MYA-2876) (Yeast)).